The primary structure comprises 141 residues: VLSPADKTNVKTAWNAVGGQAGEHGAEALERMFLSFPTTKTYFPHFDLSHGSGQVKAHGKKVADALTNAVSHLDDMPGALSALSDLHAHKLRVDPVNFKLLSHCLLVTLASHHPAEFTPAVHASLDKFFAAVSTVLTSKYR.

In terms of domain architecture, Globin spans Val1–Arg141. A Phosphoserine modification is found at Ser3. The residue at position 7 (Lys7) is an N6-succinyllysine. Residue Thr8 is modified to Phosphothreonine. The residue at position 11 (Lys11) is an N6-succinyllysine. Ser35 bears the Phosphoserine mark. Lys40 is modified (N6-succinyllysine). Ser49 carries the phosphoserine modification. His58 is a binding site for O2. Residue His87 coordinates heme b. Ser102 is subject to Phosphoserine. Thr108 is modified (phosphothreonine). Ser124 is subject to Phosphoserine. 2 positions are modified to phosphothreonine: Thr134 and Thr137. Ser138 bears the Phosphoserine mark.

Belongs to the globin family. Heterotetramer of two alpha chains and two beta chains. Red blood cells.

Involved in oxygen transport from the lung to the various peripheral tissues. Functionally, hemopressin acts as an antagonist peptide of the cannabinoid receptor CNR1. Hemopressin-binding efficiently blocks cannabinoid receptor CNR1 and subsequent signaling. This is Hemoglobin subunit alpha (HBA) from Eulemur fulvus fulvus (Brown lemur).